The sequence spans 505 residues: Probable cytochrome P450 28c1 (505 aa).

Position 444 (cysteine 444) interacts with heme.

The protein belongs to the cytochrome P450 family. Requires heme as cofactor.

It localises to the endoplasmic reticulum membrane. Its subcellular location is the microsome membrane. In terms of biological role, may be involved in the metabolism of insect hormones and in the breakdown of synthetic insecticides. In Drosophila melanogaster (Fruit fly), this protein is Probable cytochrome P450 28c1 (Cyp28c1).